Here is a 1877-residue protein sequence, read N- to C-terminus: Protein TIC 214 (1877 aa).

6 consecutive transmembrane segments (helical) span residues 18 to 38 (IINS…FSIG), 67 to 87 (FIAG…HLAL), 90 to 110 (PHTI…WNNH), 127 to 147 (LSIQ…HFIL), 175 to 195 (VGWL…LVWI), and 224 to 244 (IFSI…PSPI). Residues 249-258 (FKETSETEER) show a composition bias toward basic and acidic residues. Residues 249–308 (FKETSETEERGEGEEETDVEIETTFETKGTRQEQEGSTEEDPSLFSEEKEDPDKIDEREE) are disordered. 2 stretches are compositionally biased toward acidic residues: residues 259 to 271 (GEGE…EIET) and 284 to 298 (GSTE…EEKE). Positions 299–308 (DPDKIDEREE) are enriched in basic and acidic residues.

It belongs to the TIC214 family. As to quaternary structure, part of the Tic complex.

The protein localises to the plastid. Its subcellular location is the chloroplast inner membrane. Functionally, involved in protein precursor import into chloroplasts. May be part of an intermediate translocation complex acting as a protein-conducting channel at the inner envelope. The sequence is that of Protein TIC 214 from Eucalyptus globulus subsp. globulus (Tasmanian blue gum).